Reading from the N-terminus, the 73-residue chain is Protein DSS1 HOMOLOG ON CHROMOSOME V (73 aa).

This sequence belongs to the DSS1/SEM1 family. Part of the 26S proteasome. Interacts with BRCA2B. Interacts with EER5. Interacts with UCH1 and UCH2.

In terms of biological role, subunit of the 26S proteasome which plays a role in ubiquitin-dependent proteolysis. Also associates with the TREX-2 complex that is required for transcription-coupled mRNA export. This Arabidopsis thaliana (Mouse-ear cress) protein is Protein DSS1 HOMOLOG ON CHROMOSOME V.